The sequence spans 383 residues: 4-hydroxy-3-methylbut-2-en-1-yl diphosphate synthase (flavodoxin) (383 aa).

The [4Fe-4S] cluster site is built by Cys-277, Cys-280, Cys-312, and Glu-319.

The protein belongs to the IspG family. [4Fe-4S] cluster serves as cofactor.

It catalyses the reaction (2E)-4-hydroxy-3-methylbut-2-enyl diphosphate + oxidized [flavodoxin] + H2O + 2 H(+) = 2-C-methyl-D-erythritol 2,4-cyclic diphosphate + reduced [flavodoxin]. It functions in the pathway isoprenoid biosynthesis; isopentenyl diphosphate biosynthesis via DXP pathway; isopentenyl diphosphate from 1-deoxy-D-xylulose 5-phosphate: step 5/6. Its function is as follows. Converts 2C-methyl-D-erythritol 2,4-cyclodiphosphate (ME-2,4cPP) into 1-hydroxy-2-methyl-2-(E)-butenyl 4-diphosphate. In Caulobacter vibrioides (strain ATCC 19089 / CIP 103742 / CB 15) (Caulobacter crescentus), this protein is 4-hydroxy-3-methylbut-2-en-1-yl diphosphate synthase (flavodoxin).